We begin with the raw amino-acid sequence, 222 residues long: 3-demethoxyubiquinol 3-hydroxylase (222 aa).

Residues E71, E101, H104, E153, E185, and H188 each coordinate Fe cation.

This sequence belongs to the COQ7 family. Fe cation is required as a cofactor.

The protein resides in the cell membrane. The catalysed reaction is a 5-methoxy-2-methyl-3-(all-trans-polyprenyl)benzene-1,4-diol + AH2 + O2 = a 3-demethylubiquinol + A + H2O. Its pathway is cofactor biosynthesis; ubiquinone biosynthesis. In terms of biological role, catalyzes the hydroxylation of 2-nonaprenyl-3-methyl-6-methoxy-1,4-benzoquinol during ubiquinone biosynthesis. In Bordetella pertussis (strain Tohama I / ATCC BAA-589 / NCTC 13251), this protein is 3-demethoxyubiquinol 3-hydroxylase.